Here is a 180-residue protein sequence, read N- to C-terminus: Large ribosomal subunit protein uL5 (180 aa).

This sequence belongs to the universal ribosomal protein uL5 family. Part of the 50S ribosomal subunit; part of the 5S rRNA/L5/L18/L25 subcomplex. Contacts the 5S rRNA and the P site tRNA. Forms a bridge to the 30S subunit in the 70S ribosome.

In terms of biological role, this is one of the proteins that bind and probably mediate the attachment of the 5S RNA into the large ribosomal subunit, where it forms part of the central protuberance. In the 70S ribosome it contacts protein S13 of the 30S subunit (bridge B1b), connecting the 2 subunits; this bridge is implicated in subunit movement. Contacts the P site tRNA; the 5S rRNA and some of its associated proteins might help stabilize positioning of ribosome-bound tRNAs. This chain is Large ribosomal subunit protein uL5, found in Lactobacillus delbrueckii subsp. bulgaricus (strain ATCC 11842 / DSM 20081 / BCRC 10696 / JCM 1002 / NBRC 13953 / NCIMB 11778 / NCTC 12712 / WDCM 00102 / Lb 14).